Reading from the N-terminus, the 390-residue chain is S-adenosylmethionine synthase 1 (390 aa).

E9 is a binding site for Mg(2+). ATP is bound at residue H15. E43 provides a ligand contact to K(+). L-methionine-binding residues include E56 and Q99. ATP-binding positions include 167 to 169 (DGK), 235 to 238 (SGRF), D246, 252 to 253 (RK), A269, K273, and K277. D246 lines the L-methionine pocket. K277 lines the L-methionine pocket.

It belongs to the AdoMet synthase family. In terms of assembly, homotetramer. The cofactor is Mn(2+). It depends on Mg(2+) as a cofactor. Co(2+) serves as cofactor. Requires K(+) as cofactor.

The protein localises to the cytoplasm. It catalyses the reaction L-methionine + ATP + H2O = S-adenosyl-L-methionine + phosphate + diphosphate. Its pathway is amino-acid biosynthesis; S-adenosyl-L-methionine biosynthesis; S-adenosyl-L-methionine from L-methionine: step 1/1. Functionally, catalyzes the formation of S-adenosylmethionine from methionine and ATP. The reaction comprises two steps that are both catalyzed by the same enzyme: formation of S-adenosylmethionine (AdoMet) and triphosphate, and subsequent hydrolysis of the triphosphate. This Petunia hybrida (Petunia) protein is S-adenosylmethionine synthase 1 (SAM1).